We begin with the raw amino-acid sequence, 224 residues long: Holliday junction branch migration complex subunit RuvA (224 aa).

The domain I stretch occupies residues 1-67; the sequence is MISWLKGEKV…EDGTSLYGFI (67 aa). Residues 68–146 form a domain II region; that stretch reads EVNQRDLFRE…RFTDNDKTIH (79 aa). Positions 147 to 157 are flexible linker; the sequence is ENKNDIEANQF. Residues 157–224 are domain III; sequence FSKYIDEIYL…ILMKLSEKST (68 aa).

This sequence belongs to the RuvA family. Homotetramer. Forms an RuvA(8)-RuvB(12)-Holliday junction (HJ) complex. HJ DNA is sandwiched between 2 RuvA tetramers; dsDNA enters through RuvA and exits via RuvB. An RuvB hexamer assembles on each DNA strand where it exits the tetramer. Each RuvB hexamer is contacted by two RuvA subunits (via domain III) on 2 adjacent RuvB subunits; this complex drives branch migration. In the full resolvosome a probable DNA-RuvA(4)-RuvB(12)-RuvC(2) complex forms which resolves the HJ.

It is found in the cytoplasm. The RuvA-RuvB-RuvC complex processes Holliday junction (HJ) DNA during genetic recombination and DNA repair, while the RuvA-RuvB complex plays an important role in the rescue of blocked DNA replication forks via replication fork reversal (RFR). RuvA specifically binds to HJ cruciform DNA, conferring on it an open structure. The RuvB hexamer acts as an ATP-dependent pump, pulling dsDNA into and through the RuvAB complex. HJ branch migration allows RuvC to scan DNA until it finds its consensus sequence, where it cleaves and resolves the cruciform DNA. The polypeptide is Holliday junction branch migration complex subunit RuvA (Prochlorococcus marinus (strain NATL2A)).